The chain runs to 245 residues: 3-deoxy-manno-octulosonate cytidylyltransferase (245 aa).

It belongs to the KdsB family.

It localises to the cytoplasm. It catalyses the reaction 3-deoxy-alpha-D-manno-oct-2-ulosonate + CTP = CMP-3-deoxy-beta-D-manno-octulosonate + diphosphate. It participates in nucleotide-sugar biosynthesis; CMP-3-deoxy-D-manno-octulosonate biosynthesis; CMP-3-deoxy-D-manno-octulosonate from 3-deoxy-D-manno-octulosonate and CTP: step 1/1. The protein operates within bacterial outer membrane biogenesis; lipopolysaccharide biosynthesis. Activates KDO (a required 8-carbon sugar) for incorporation into bacterial lipopolysaccharide in Gram-negative bacteria. The sequence is that of 3-deoxy-manno-octulosonate cytidylyltransferase from Rhodopseudomonas palustris (strain HaA2).